The chain runs to 671 residues: NADH-quinone oxidoreductase subunit G (671 aa).

In terms of domain architecture, 2Fe-2S ferredoxin-type spans 1–78; it reads MIKLNIDGSE…GMVIHTDTPM (78 aa). [2Fe-2S] cluster contacts are provided by cysteine 34, cysteine 45, cysteine 48, and cysteine 62. The region spanning 78-117 is the 4Fe-4S His(Cys)3-ligated-type domain; that stretch reads MVKKAREGVMEFLLINHPLDCPICDQGGECDLQDQAFRYG. [4Fe-4S] cluster contacts are provided by histidine 94, cysteine 98, cysteine 101, cysteine 107, cysteine 146, cysteine 149, cysteine 152, and cysteine 196. One can recognise a 4Fe-4S Mo/W bis-MGD-type domain in the interval 215-271; that stretch reads LKHTASIGVHDAEGSNIRIDSRGDEVMRILPRVNEEINEEWLSDKNRFSYDGLKYQR.

The protein belongs to the complex I 75 kDa subunit family. It depends on [2Fe-2S] cluster as a cofactor. The cofactor is [4Fe-4S] cluster.

The catalysed reaction is a quinone + NADH + 5 H(+)(in) = a quinol + NAD(+) + 4 H(+)(out). Functionally, NDH-1 shuttles electrons from NADH, via FMN and iron-sulfur (Fe-S) centers, to quinones in the respiratory chain. Couples the redox reaction to proton translocation (for every two electrons transferred, four hydrogen ions are translocated across the cytoplasmic membrane), and thus conserves the redox energy in a proton gradient. The sequence is that of NADH-quinone oxidoreductase subunit G (nuoG) from Rickettsia felis (strain ATCC VR-1525 / URRWXCal2) (Rickettsia azadi).